A 600-amino-acid polypeptide reads, in one-letter code: Elongation factor 4 (600 aa).

Residues 3–185 (KYIRNFSIIA…CLIHDIPHPQ (183 aa)) enclose the tr-type G domain. Residues 15 to 20 (DHGKST) and 132 to 135 (NKID) contribute to the GTP site.

Belongs to the TRAFAC class translation factor GTPase superfamily. Classic translation factor GTPase family. LepA subfamily.

Its subcellular location is the cell inner membrane. The catalysed reaction is GTP + H2O = GDP + phosphate + H(+). In terms of biological role, required for accurate and efficient protein synthesis under certain stress conditions. May act as a fidelity factor of the translation reaction, by catalyzing a one-codon backward translocation of tRNAs on improperly translocated ribosomes. Back-translocation proceeds from a post-translocation (POST) complex to a pre-translocation (PRE) complex, thus giving elongation factor G a second chance to translocate the tRNAs correctly. Binds to ribosomes in a GTP-dependent manner. The polypeptide is Elongation factor 4 (Blochmanniella pennsylvanica (strain BPEN)).